The sequence spans 36 residues: DNA binding protein ORF8 (36 aa).

Belongs to the microviridae J protein family.

It localises to the virion. It is found in the host cytoplasm. Its function is as follows. Mediates ssDNA packaging into virion, it locates to the internal surface of the capsid. Additionally, plays a role in viral attachment to the host cell. This chain is DNA binding protein ORF8, found in Chlamydia phage 1 (Bacteriophage Chp1).